The following is a 115-amino-acid chain: Urease subunit beta (115 aa).

It belongs to the urease beta subunit family. As to quaternary structure, heterotrimer of UreA (gamma), UreB (beta) and UreC (alpha) subunits. Three heterotrimers associate to form the active enzyme.

Its subcellular location is the cytoplasm. It catalyses the reaction urea + 2 H2O + H(+) = hydrogencarbonate + 2 NH4(+). Its pathway is nitrogen metabolism; urea degradation; CO(2) and NH(3) from urea (urease route): step 1/1. This chain is Urease subunit beta, found in Arthrobacter sp. (strain FB24).